A 475-amino-acid chain; its full sequence is tRNA-2-methylthio-N(6)-dimethylallyladenosine synthase (475 aa).

Positions 1–10 (MHETTLKREG) are enriched in basic and acidic residues. Residues 1-25 (MHETTLKREGASTPSNPTPSTHAAG) form a disordered region. Over residues 12–23 (STPSNPTPSTHA) the composition is skewed to polar residues. One can recognise an MTTase N-terminal domain in the interval 27 to 144 (GKIYIRTFGC…LPELIRRRRD (118 aa)). [4Fe-4S] cluster-binding residues include Cys-36, Cys-73, Cys-107, Cys-181, Cys-185, and Cys-188. Positions 167–400 (RVEGATAFVS…QALINEQAAA (234 aa)) constitute a Radical SAM core domain. The TRAM domain maps to 403–466 (QSMVGTRQRL…TNSLRGRVAG (64 aa)).

The protein belongs to the methylthiotransferase family. MiaB subfamily. Monomer. The cofactor is [4Fe-4S] cluster.

The protein localises to the cytoplasm. The enzyme catalyses N(6)-dimethylallyladenosine(37) in tRNA + (sulfur carrier)-SH + AH2 + 2 S-adenosyl-L-methionine = 2-methylsulfanyl-N(6)-dimethylallyladenosine(37) in tRNA + (sulfur carrier)-H + 5'-deoxyadenosine + L-methionine + A + S-adenosyl-L-homocysteine + 2 H(+). Catalyzes the methylthiolation of N6-(dimethylallyl)adenosine (i(6)A), leading to the formation of 2-methylthio-N6-(dimethylallyl)adenosine (ms(2)i(6)A) at position 37 in tRNAs that read codons beginning with uridine. The protein is tRNA-2-methylthio-N(6)-dimethylallyladenosine synthase of Bordetella avium (strain 197N).